The sequence spans 572 residues: Phosphoenolpyruvate-protein phosphotransferase (572 aa).

Residue His190 is the Tele-phosphohistidine intermediate of the active site. Arg297 and Arg333 together coordinate phosphoenolpyruvate. Glu427 and Asp451 together coordinate Mg(2+). Phosphoenolpyruvate is bound by residues 450-451 (ND) and Arg461. Cys498 acts as the Proton donor in catalysis.

It belongs to the PEP-utilizing enzyme family. As to quaternary structure, homodimer. It depends on Mg(2+) as a cofactor.

Its subcellular location is the cytoplasm. The catalysed reaction is L-histidyl-[protein] + phosphoenolpyruvate = N(pros)-phospho-L-histidyl-[protein] + pyruvate. Its function is as follows. General (non sugar-specific) component of the phosphoenolpyruvate-dependent sugar phosphotransferase system (sugar PTS). This major carbohydrate active-transport system catalyzes the phosphorylation of incoming sugar substrates concomitantly with their translocation across the cell membrane. Enzyme I transfers the phosphoryl group from phosphoenolpyruvate (PEP) to the phosphoryl carrier protein (HPr). In Mycoplasma genitalium (strain ATCC 33530 / DSM 19775 / NCTC 10195 / G37) (Mycoplasmoides genitalium), this protein is Phosphoenolpyruvate-protein phosphotransferase (ptsI).